A 437-amino-acid chain; its full sequence is Immunoglobulin superfamily member 11 (437 aa).

An N-terminal signal peptide occupies residues 1–22 (MTCRGSPLAPLLLFSLHGVAAS). In terms of domain architecture, Ig-like V-type spans 23–136 (LEVSESPGSV…DRGGRNIGVT (114 aa)). Over 23–241 (LEVSESPGSV…VISPQPRSIG (219 aa)) the chain is Extracellular. 2 disulfide bridges follow: cysteine 44-cysteine 120 and cysteine 165-cysteine 215. Asparagine 102 carries N-linked (GlcNAc...) asparagine glycosylation. The Ig-like C2-type domain occupies 144-234 (PSAPHCQIQG…TCLLDLQVIS (91 aa)). The helical transmembrane segment at 242-262 (LIAGAIGTGAVIIIFCIALIL) threads the bilayer. The Cytoplasmic portion of the chain corresponds to 263-437 (GAFFYWRSKN…PAQSRAGSLV (175 aa)). Arginine 379 is subject to Omega-N-methylarginine. The segment at 382-405 (SLPAVSRSNGSVSRKARPPPVPSL) is disordered.

N-glycosylated.

Its subcellular location is the cell membrane. Functionally, functions as a cell adhesion molecule through homophilic interaction. Stimulates cell growth. In Bos taurus (Bovine), this protein is Immunoglobulin superfamily member 11 (IGSF11).